The chain runs to 880 residues: DNA gyrase subunit A (880 aa).

Residues 35–530 (LPDVRDGLKP…ASGDIDLEDL (496 aa)) form the Topo IIA-type catalytic domain. Y123 serves as the catalytic O-(5'-phospho-DNA)-tyrosine intermediate. Residues 557 to 563 (QRRGGKG) carry the GyrA-box motif.

It belongs to the type II topoisomerase GyrA/ParC subunit family. As to quaternary structure, heterotetramer, composed of two GyrA and two GyrB chains. In the heterotetramer, GyrA contains the active site tyrosine that forms a transient covalent intermediate with DNA, while GyrB binds cofactors and catalyzes ATP hydrolysis.

It is found in the cytoplasm. It carries out the reaction ATP-dependent breakage, passage and rejoining of double-stranded DNA.. Its function is as follows. A type II topoisomerase that negatively supercoils closed circular double-stranded (ds) DNA in an ATP-dependent manner to modulate DNA topology and maintain chromosomes in an underwound state. Negative supercoiling favors strand separation, and DNA replication, transcription, recombination and repair, all of which involve strand separation. Also able to catalyze the interconversion of other topological isomers of dsDNA rings, including catenanes and knotted rings. Type II topoisomerases break and join 2 DNA strands simultaneously in an ATP-dependent manner. The polypeptide is DNA gyrase subunit A (Haemophilus influenzae (strain ATCC 51907 / DSM 11121 / KW20 / Rd)).